A 945-amino-acid polypeptide reads, in one-letter code: Leucine--tRNA ligase (945 aa).

Residues proline 43–histidine 53 carry the 'HIGH' region motif. The 'KMSKS' region signature appears at lysine 638–serine 642. An ATP-binding site is contributed by lysine 641.

Belongs to the class-I aminoacyl-tRNA synthetase family.

It localises to the cytoplasm. It catalyses the reaction tRNA(Leu) + L-leucine + ATP = L-leucyl-tRNA(Leu) + AMP + diphosphate. The polypeptide is Leucine--tRNA ligase (Pyrobaculum neutrophilum (strain DSM 2338 / JCM 9278 / NBRC 100436 / V24Sta) (Thermoproteus neutrophilus)).